Consider the following 156-residue polypeptide: Small ribosomal subunit protein uS7 (156 aa).

It belongs to the universal ribosomal protein uS7 family. Part of the 30S ribosomal subunit. Contacts proteins S9 and S11.

One of the primary rRNA binding proteins, it binds directly to 16S rRNA where it nucleates assembly of the head domain of the 30S subunit. Is located at the subunit interface close to the decoding center, probably blocks exit of the E-site tRNA. This chain is Small ribosomal subunit protein uS7, found in Sorangium cellulosum (strain So ce56) (Polyangium cellulosum (strain So ce56)).